Reading from the N-terminus, the 515-residue chain is 2-isopropylmalate synthase (515 aa).

The 263-residue stretch at 5-267 (VIIFDTTLRD…HTNLKHDEIH (263 aa)) folds into the Pyruvate carboxyltransferase domain. Mn(2+) is bound by residues Asp14, His202, His204, and Asn238. Positions 392–515 (KLNYLSVQSG…EIKQKKVETV (124 aa)) are regulatory domain.

This sequence belongs to the alpha-IPM synthase/homocitrate synthase family. LeuA type 1 subfamily. In terms of assembly, homodimer. Requires Mn(2+) as cofactor.

It localises to the cytoplasm. It catalyses the reaction 3-methyl-2-oxobutanoate + acetyl-CoA + H2O = (2S)-2-isopropylmalate + CoA + H(+). It participates in amino-acid biosynthesis; L-leucine biosynthesis; L-leucine from 3-methyl-2-oxobutanoate: step 1/4. Its function is as follows. Catalyzes the condensation of the acetyl group of acetyl-CoA with 3-methyl-2-oxobutanoate (2-ketoisovalerate) to form 3-carboxy-3-hydroxy-4-methylpentanoate (2-isopropylmalate). This Aliivibrio fischeri (strain MJ11) (Vibrio fischeri) protein is 2-isopropylmalate synthase.